A 1037-amino-acid chain; its full sequence is Probable inorganic carbon transporter subunit DabA 2 (1037 aa).

The Zn(2+) site is built by cysteine 460, aspartate 462, histidine 719, and cysteine 734.

It belongs to the inorganic carbon transporter (TC 9.A.2) DabA family. As to quaternary structure, forms a complex with DabB. It depends on Zn(2+) as a cofactor.

It is found in the cell inner membrane. Its function is as follows. Part of an energy-coupled inorganic carbon pump. The protein is Probable inorganic carbon transporter subunit DabA 2 of Nitrobacter winogradskyi (strain ATCC 25391 / DSM 10237 / CIP 104748 / NCIMB 11846 / Nb-255).